We begin with the raw amino-acid sequence, 502 residues long: ATP synthase subunit alpha (502 aa).

Residue 169 to 176 (GDRQTGKT) coordinates ATP.

The protein belongs to the ATPase alpha/beta chains family. As to quaternary structure, F-type ATPases have 2 components, CF(1) - the catalytic core - and CF(0) - the membrane proton channel. CF(1) has five subunits: alpha(3), beta(3), gamma(1), delta(1), epsilon(1). CF(0) has three main subunits: a(1), b(2) and c(9-12). The alpha and beta chains form an alternating ring which encloses part of the gamma chain. CF(1) is attached to CF(0) by a central stalk formed by the gamma and epsilon chains, while a peripheral stalk is formed by the delta and b chains.

It localises to the cell membrane. The enzyme catalyses ATP + H2O + 4 H(+)(in) = ADP + phosphate + 5 H(+)(out). Produces ATP from ADP in the presence of a proton gradient across the membrane. The alpha chain is a regulatory subunit. The protein is ATP synthase subunit alpha of Desulfitobacterium hafniense (strain DSM 10664 / DCB-2).